The sequence spans 437 residues: Carbonic anhydrase 9 (437 aa).

Positions 1-31 (MASLGPSPWAPLSTPAPTAQLLLFLLLQVSA) are cleaved as a signal peptide. The segment at 32 to 95 (QPQGLSGMQG…RMEESLGLED (64 aa)) is proteoglycan-like (PG). At 32–390 (QPQGLSGMQG…HVNSCFTAGD (359 aa)) the chain is on the extracellular side. Residues 34–118 (QGLSGMQGEP…HGDEKGGGHS (85 aa)) form a disordered region. The span at 50 to 79 (SGEDELGVDVLPSEEDAPEEADPPDGEDPP) shows a compositional bias: acidic residues. The interval 96-390 (LSTPEAPEHS…HVNSCFTAGD (295 aa)) is catalytic. A glycan (O-linked (GlcNAc...) threonine) is linked at T98. Residues 118–369 (SHWSYGGTLL…LNGRTIEASF (252 aa)) enclose the Alpha-carbonic anhydrase domain. C135 and C315 are joined by a disulfide. Residue H179 is the Proton donor/acceptor of the active site. Zn(2+) is bound by residues H205, H207, and H230. A substrate-binding site is contributed by 311–312 (TT). N-linked (GlcNAc...) asparagine glycosylation is present at N325. The chain crosses the membrane as a helical span at residues 391–411 (ILALVFGLLFAVTSIAFLLQL). The Cytoplasmic portion of the chain corresponds to 412-437 (RRQHRHRSGTKDRVSYSPAEMTETGA). Y427 carries the phosphotyrosine modification.

Belongs to the alpha-carbonic anhydrase family. In terms of assembly, forms oligomers linked by disulfide bonds. Requires Zn(2+) as cofactor. Asn-325 bears high-mannose type glycan structures.

Its subcellular location is the nucleus. The protein localises to the nucleolus. It is found in the cell membrane. The protein resides in the cell projection. It localises to the microvillus membrane. It catalyses the reaction hydrogencarbonate + H(+) = CO2 + H2O. Its activity is regulated as follows. Inhibited by acetazolamide. Its function is as follows. Catalyzes the interconversion between carbon dioxide and water and the dissociated ions of carbonic acid (i.e. bicarbonate and hydrogen ions). This chain is Carbonic anhydrase 9 (Ca9), found in Mus musculus (Mouse).